Here is a 320-residue protein sequence, read N- to C-terminus: GPI-specific phospholipase A2-like PGAP3 (320 aa).

The signal sequence occupies residues 1-20 (MAGLAARLVLLAGAAALASG). At 21-98 (SQGDREPVYR…QFHGKWPFSR (78 aa)) the chain is on the lumenal side. Residue asparagine 40 is glycosylated (N-linked (GlcNAc...) asparagine). Residues 99 to 119 (FLFFQEPASAVASFLNGLASL) form a helical membrane-spanning segment. Topologically, residues 120-135 (VMLCRYRTFVPASSPM) are cytoplasmic. Residues 136 to 156 (YHTCVAFAWVSLNAWFWSTVF) traverse the membrane as a helical segment. At 157–169 (HTRDTDLTEKMDY) the chain is on the lumenal side. The helical transmembrane segment at 170-190 (FCASTVILHSIYLCCVRTVGL) threads the bilayer. The Cytoplasmic portion of the chain corresponds to 191-193 (QHP). A helical membrane pass occupies residues 194–214 (AVVSAFRALLLLMLTVHVSYL). Over 215–224 (SLIRFDYGYN) the chain is Lumenal. A helical transmembrane segment spans residues 225–245 (LVANVAIGLVNVVWWLAWCLW). Over 246–257 (NQRRLPHVRKCV) the chain is Cytoplasmic. Residues 258–278 (VVVLLLQGLSLLELLDFPPLF) traverse the membrane as a helical segment. Residue tryptophan 279 is a topological domain, lumenal. A helical membrane pass occupies residues 280–299 (VLDAHAIWHISTIPVHVLFF). Topologically, residues 300–320 (SFLEDDSLYLLKESEDKFKLD) are cytoplasmic.

It belongs to the PGAP3 family. Ubiquitously expressed, with highest levels in thyroid and placenta.

The protein resides in the golgi apparatus membrane. Functionally, involved in the fatty acid remodeling steps of GPI-anchor maturation where the unsaturated acyl chain at sn-2 of inositol phosphate is replaced by a saturated stearoyl chain. May catalyze the first step of the fatty acid remodeling, by removing the unsaturated acyl chain at sn-2 of inositol phosphate, generating a lyso-GPI intermediate. The fatty acid remodeling steps is critical for the integration of GPI-APs into lipid rafts. In Homo sapiens (Human), this protein is GPI-specific phospholipase A2-like PGAP3.